Consider the following 89-residue polypeptide: Cell division protein FtsL (89 aa).

At 1–6 the chain is on the cytoplasmic side; sequence MAMNKL. A helical transmembrane segment spans residues 7–24; that stretch reads NFLLLLAVCVSAFSVVMQ. Over 25-89 the chain is Periplasmic; the sequence is QNQYRLNFTA…GNTFMVEHQR (65 aa). A coiled-coil region spans residues 33–73; the sequence is TALDKAKKQEIALEQDYAQMRLQQARLANHEAIRAAAEKQN.

It belongs to the FtsL family. In terms of assembly, part of a complex composed of FtsB, FtsL and FtsQ.

The protein localises to the cell inner membrane. In terms of biological role, essential cell division protein. May link together the upstream cell division proteins, which are predominantly cytoplasmic, with the downstream cell division proteins, which are predominantly periplasmic. The polypeptide is Cell division protein FtsL (Neisseria meningitidis serogroup B (strain ATCC BAA-335 / MC58)).